We begin with the raw amino-acid sequence, 432 residues long: 3-chlorobenzoate-3,4-dioxygenase oxygenase subunit (432 aa).

A Rieske domain is found at 27 to 133 (WIPALKSTEL…VKEMAGVVWV (107 aa)). Residues Cys69, His71, Cys88, and His91 each contribute to the [2Fe-2S] cluster site. His180 and His185 together coordinate Fe cation.

Belongs to the bacterial ring-hydroxylating dioxygenase alpha subunit family. In terms of assembly, this dioxygenase system consists of two proteins: an oxygenase and an oxygenase reductase. It depends on [2Fe-2S] cluster as a cofactor. Requires Fe cation as cofactor.

The polypeptide is 3-chlorobenzoate-3,4-dioxygenase oxygenase subunit (cbaA) (Comamonas testosteroni (Pseudomonas testosteroni)).